The following is a 694-amino-acid chain: Rabphilin-3A (694 aa).

The span at 1–12 shows a compositional bias: polar residues; that stretch reads MTDTVFSNSSNR. The segment at 1-51 is disordered; that stretch reads MTDTVFSNSSNRWMYPSDRPLQSNDKEQLQAGWSVHPGGQPDRQRKQEELT. The RabBD domain occupies 44 to 160; sequence QRKQEELTDE…KRSGAWFFKG (117 aa). Residues 92-148 form an FYVE-type zinc finger; it reads GDGVNRCILCGEQLGMLGSACVVCEDCKKNVCTKCGVETNNRLHSVWLCKICIEQRE. Zn(2+)-binding residues include C98, C101, C115, C118, C123, C126, C140, and C143. The segment at 166 to 388 is disordered; sequence LPQPMPIKKT…EEEANSYDSD (223 aa). The segment covering 177 to 186 has biased composition (low complexity); the sequence is PQQPVSEPAA. Residues 202 to 211 show a composition bias toward basic and acidic residues; that stretch reads ARGDSEDRRG. An Omega-N-methylarginine modification is found at R226. Phosphoserine is present on S272. A compositionally biased stretch (low complexity) spans 352-370; the sequence is PSGPYSQASAAAPQPAAAR. Residues 375 to 388 are compositionally biased toward acidic residues; sequence PEEEEEEANSYDSD. The C2 1 domain occupies 392–514; that stretch reads TLGALEFSLL…KPNQRKNFNI (123 aa). Ca(2+) is bound by residues M422, D423, D429, D484, E485, D486, E492, E539, D581, D587, D641, Y642, D643, and D649. Residues 550–683 enclose the C2 2 domain; it reads ERGKILVSLM…NKDKKIERWH (134 aa). Phosphoserine is present on residues S692 and S693.

As to quaternary structure, interacts with RAB3B, RAB3C, RAB3D, RAB8A, RAB27A and RAB27B. Interacts with RAB3A; this interaction recruits RPH3A to synaptic vesicules. Interacts (via C2B domain) with SNAP25. Interacts with deubiquitinating enzyme CAND1; this interaction results in the deubiquitination of RPH3A. Interacts with GRIN2A and DLG4; this ternary complex regulates NMDA receptor composition at postsynaptic membranes. Interacts with SNCA. Ca(2+) serves as cofactor. Post-translationally, ubiquitinated. Deubiquitinated by CAND1 to prevent its degradation.

It localises to the cytoplasmic vesicle. Its subcellular location is the secretory vesicle. The protein resides in the synaptic vesicle membrane. The protein localises to the cell projection. It is found in the dendritic spine. It localises to the postsynaptic cell membrane. Its subcellular location is the membrane. In terms of biological role, plays an essential role in docking and fusion steps of regulated exocytosis. At the presynaptic level, RPH3A is recruited by RAB3A to the synaptic vesicle membrane in a GTP-dependent manner where it modulates synaptic vesicle trafficking and calcium-triggered neurotransmitter release. In the post-synaptic compartment, forms a ternary complex with GRIN2A and DLG4 and regulates NMDA receptor stability. Also plays a role in the exocytosis of arginine vasopressin hormone. The chain is Rabphilin-3A (RPH3A) from Homo sapiens (Human).